A 735-amino-acid chain; its full sequence is DNA ligase 1 (735 aa).

Residues 1 to 11 are compositionally biased toward basic and acidic residues; it reads MAGDKQGDKQA. A disordered region spans residues 1–23; that stretch reads MAGDKQGDKQAETTSVPAEARER. Residues 48-52, 97-98, and E128 each bind NAD(+); these read DAEFD and SL. The active-site N6-AMP-lysine intermediate is the K130. 4 residues coordinate NAD(+): R151, E188, K305, and K329. Zn(2+)-binding residues include C423, C426, C442, and C448. Residues 643 to 732 enclose the BRCT domain; it reads EGPRPLEGLT…PEAAADVALS (90 aa).

The protein belongs to the NAD-dependent DNA ligase family. LigA subfamily. Mg(2+) serves as cofactor. Requires Mn(2+) as cofactor.

It catalyses the reaction NAD(+) + (deoxyribonucleotide)n-3'-hydroxyl + 5'-phospho-(deoxyribonucleotide)m = (deoxyribonucleotide)n+m + AMP + beta-nicotinamide D-nucleotide.. Its function is as follows. DNA ligase that catalyzes the formation of phosphodiester linkages between 5'-phosphoryl and 3'-hydroxyl groups in double-stranded DNA using NAD as a coenzyme and as the energy source for the reaction. It is essential for DNA replication and repair of damaged DNA. This chain is DNA ligase 1, found in Streptomyces coelicolor (strain ATCC BAA-471 / A3(2) / M145).